Reading from the N-terminus, the 592-residue chain is MGGPHHQHQQHQQQQQVVGGGNGHGGGAPVHMRAPPNSQQLPPQMPRSQNYANGSSSAASVAAAPPTPRSAFPGAPLTASAVALKGAIPQRPPAMTSPAAAAAGAALAAGAPYRGATSWTPQGYAPAAAAAAAAVAQQAYRYTAPLPQPAYAAYTPHTATTPATTTYGQRVPTAASPSNTNSSSSSNTGSQSGTLSTSLSNTTNTNTTMGPNGTAQNQNQQGGEQLSKTNLYIRGLQQGTTDKDLINMCAQYGTIISTKAILDKTTNKCKGYGFVDFEQPAYAEGAVKGLQAKGVQAQMAKVGIWVLHRPAIQQEQDPTNLYIANLPPHFKETDLEAMLAKFGQVVSTRILRDQQMNSKGVGFARMESREKCEQIIQMFNGNTITGAKDPLLVKFADGGPKKKNLFKTPDPNARAWRDVSAEGIPVAYDPTMQQNGVSVNVGTPIGVPYSRFGAPQVGGYPVAGSQWIPGYMMTQPITQVDDQYSSSALQYMQMAAAPQLGVTSYKPQEVNQVPARGISMMVSGDTAVPYGTMMPQLATLQIGNSYISPTYPYYAPPPTILPTMPMTDSEQASTAASPDEAYTQYPHQAAPK.

A disordered region spans residues 1–68 (MGGPHHQHQQ…ASVAAAPPTP (68 aa)). A compositionally biased stretch (gly residues) spans 18–28 (VGGGNGHGGGA). Positions 36–54 (PNSQQLPPQMPRSQNYANG) are enriched in polar residues. The segment covering 55-64 (SSSAASVAAA) has biased composition (low complexity). Phosphotyrosine is present on residues Y124 and Y140. The interval 162–224 (PATTTYGQRV…AQNQNQQGGE (63 aa)) is disordered. The span at 176-224 (SPSNTNSSSSSNTGSQSGTLSTSLSNTTNTNTTMGPNGTAQNQNQQGGE) shows a compositional bias: low complexity. RRM domains follow at residues 229–307 (TNLY…IWVL) and 319–398 (TNLY…FADG). The disordered stretch occupies residues 565-592 (PMTDSEQASTAASPDEAYTQYPHQAAPK).

In terms of biological role, has a role in the perception of gravity. The polypeptide is Protein alan shepard (Drosophila mojavensis (Fruit fly)).